The sequence spans 126 residues: Small ribosomal subunit protein uS11 (126 aa).

It belongs to the universal ribosomal protein uS11 family. As to quaternary structure, part of the 30S ribosomal subunit.

Its function is as follows. Located on the platform of the 30S subunit. This is Small ribosomal subunit protein uS11 from Methanosarcina mazei (strain ATCC BAA-159 / DSM 3647 / Goe1 / Go1 / JCM 11833 / OCM 88) (Methanosarcina frisia).